We begin with the raw amino-acid sequence, 297 residues long: Pyrroline-5-carboxylate reductase 1 (297 aa).

Belongs to the pyrroline-5-carboxylate reductase family.

It is found in the cytoplasm. It carries out the reaction L-proline + NADP(+) = (S)-1-pyrroline-5-carboxylate + NADPH + 2 H(+). The enzyme catalyses L-proline + NAD(+) = (S)-1-pyrroline-5-carboxylate + NADH + 2 H(+). It functions in the pathway amino-acid biosynthesis; L-proline biosynthesis; L-proline from L-glutamate 5-semialdehyde: step 1/1. In terms of biological role, catalyzes the reduction of 1-pyrroline-5-carboxylate (PCA) to L-proline. This chain is Pyrroline-5-carboxylate reductase 1 (proH), found in Bacillus subtilis (strain 168).